Consider the following 118-residue polypeptide: Small ribosomal subunit protein uS13 (118 aa).

Residues 94 to 118 (GLPVRGQRTKTNARTRKGPRKPIKK) form a disordered region.

This sequence belongs to the universal ribosomal protein uS13 family. In terms of assembly, part of the 30S ribosomal subunit. Forms a loose heterodimer with protein S19. Forms two bridges to the 50S subunit in the 70S ribosome.

Its function is as follows. Located at the top of the head of the 30S subunit, it contacts several helices of the 16S rRNA. In the 70S ribosome it contacts the 23S rRNA (bridge B1a) and protein L5 of the 50S subunit (bridge B1b), connecting the 2 subunits; these bridges are implicated in subunit movement. Contacts the tRNAs in the A and P-sites. This chain is Small ribosomal subunit protein uS13, found in Pasteurella multocida (strain Pm70).